The chain runs to 231 residues: ATP-dependent dethiobiotin synthetase BioD 2 (231 aa).

Position 13–18 (13–18) interacts with ATP; it reads SVGKTV. Thr-17 contacts Mg(2+). Residue Lys-38 is part of the active site. ATP contacts are provided by residues Asp-55, 112–115, 172–173, 201–203, and Gln-208; these read EGTG, NR, and PYL. The Mg(2+) site is built by Asp-55 and Glu-112.

The protein belongs to the dethiobiotin synthetase family. Homodimer. It depends on Mg(2+) as a cofactor.

It is found in the cytoplasm. It carries out the reaction (7R,8S)-7,8-diammoniononanoate + CO2 + ATP = (4R,5S)-dethiobiotin + ADP + phosphate + 3 H(+). It functions in the pathway cofactor biosynthesis; biotin biosynthesis; biotin from 7,8-diaminononanoate: step 1/2. Functionally, catalyzes a mechanistically unusual reaction, the ATP-dependent insertion of CO2 between the N7 and N8 nitrogen atoms of 7,8-diaminopelargonic acid (DAPA, also called 7,8-diammoniononanoate) to form a ureido ring. This chain is ATP-dependent dethiobiotin synthetase BioD 2, found in Salmonella typhimurium (strain LT2 / SGSC1412 / ATCC 700720).